We begin with the raw amino-acid sequence, 945 residues long: Isoleucine--tRNA ligase (945 aa).

Positions 67–77 (PYANGQIHLGH) match the 'HIGH' region motif. Glu573 is a binding site for L-isoleucyl-5'-AMP. The short motif at 614–618 (KMSKS) is the 'KMSKS' region element. Position 617 (Lys617) interacts with ATP. Zn(2+)-binding residues include Cys908, Cys911, Cys928, and Cys931.

It belongs to the class-I aminoacyl-tRNA synthetase family. IleS type 1 subfamily. As to quaternary structure, monomer. Zn(2+) serves as cofactor.

It localises to the cytoplasm. It carries out the reaction tRNA(Ile) + L-isoleucine + ATP = L-isoleucyl-tRNA(Ile) + AMP + diphosphate. Catalyzes the attachment of isoleucine to tRNA(Ile). As IleRS can inadvertently accommodate and process structurally similar amino acids such as valine, to avoid such errors it has two additional distinct tRNA(Ile)-dependent editing activities. One activity is designated as 'pretransfer' editing and involves the hydrolysis of activated Val-AMP. The other activity is designated 'posttransfer' editing and involves deacylation of mischarged Val-tRNA(Ile). The polypeptide is Isoleucine--tRNA ligase (Acinetobacter baylyi (strain ATCC 33305 / BD413 / ADP1)).